We begin with the raw amino-acid sequence, 170 residues long: MTKKVYHQYWFWYLAAFVVFLLDQGSKHWIEAAFDYNETKVFTSFFNFTLRYNPGAAFSFLADAGGWQRWFFTIVAVAASVLLIVWICRVASSKPREAFALSFILGGAVGNLYDRIIHGHVVDFIVVHYQDYYWPAFNLADAAISLGAMVLIADLFINPDKTSGEKPTNA.

The next 3 membrane-spanning stretches (helical) occupy residues 5–25 (VYHQ…LDQG), 70–90 (WFFT…ICRV), and 98–118 (AFAL…RIIH). Active-site residues include Asp-123 and Asp-141. Residues 137–157 (FNLADAAISLGAMVLIADLFI) traverse the membrane as a helical segment.

The protein belongs to the peptidase A8 family.

Its subcellular location is the cell inner membrane. It catalyses the reaction Release of signal peptides from bacterial membrane prolipoproteins. Hydrolyzes -Xaa-Yaa-Zaa-|-(S,diacylglyceryl)Cys-, in which Xaa is hydrophobic (preferably Leu), and Yaa (Ala or Ser) and Zaa (Gly or Ala) have small, neutral side chains.. The protein operates within protein modification; lipoprotein biosynthesis (signal peptide cleavage). Its function is as follows. This protein specifically catalyzes the removal of signal peptides from prolipoproteins. This is Lipoprotein signal peptidase from Cellvibrio japonicus (strain Ueda107) (Pseudomonas fluorescens subsp. cellulosa).